Reading from the N-terminus, the 291-residue chain is Co-chaperone protein DjlA (291 aa).

Residues 1 to 6 are Periplasmic-facing; it reads MRYWGK. A helical membrane pass occupies residues 7–31; sequence LLGLALGIVSSTGIWGMIMGLLMGH. Residues 32–291 lie on the Cytoplasmic side of the membrane; sequence WIDRARASRR…ELLKSANQTK (260 aa). Residues 177–223 form a disordered region; it reads ESPTGQQSRQNQSRQNGKSQQRRNNGYSNGHSYGGQRPPSPLRGPTV. Over residues 181 to 211 the composition is skewed to low complexity; it reads GQQSRQNQSRQNGKSQQRRNNGYSNGHSYGG. In terms of domain architecture, J spans 225 to 291; sequence SACRTLGVRS…ELLKSANQTK (67 aa).

Homodimer.

The protein resides in the cell inner membrane. Functionally, regulatory DnaK co-chaperone. Direct interaction between DnaK and DjlA is needed for the induction of the wcaABCDE operon, involved in the synthesis of a colanic acid polysaccharide capsule, possibly through activation of the RcsB/RcsC phosphotransfer signaling pathway. The colanic acid capsule may help the bacterium survive conditions outside the host. The sequence is that of Co-chaperone protein DjlA from Pectobacterium atrosepticum (strain SCRI 1043 / ATCC BAA-672) (Erwinia carotovora subsp. atroseptica).